We begin with the raw amino-acid sequence, 465 residues long: Type II restriction enzyme BsuMI component YdjA (465 aa).

BsuMI restriction activity requires YdiR, YdiS and YdjA.

It carries out the reaction Endonucleolytic cleavage of DNA to give specific double-stranded fragments with terminal 5'-phosphates.. Its function is as follows. A P subtype restriction enzyme that recognizes the double-stranded sequence 5'-CTCGAG-3'; the cleavage site is unknown. This chain is Type II restriction enzyme BsuMI component YdjA (ydjA), found in Bacillus subtilis (strain 168).